The sequence spans 145 residues: 5-hydroxymethyl-dUMP N-hydrolase (145 aa).

8 residues coordinate 5-hydroxymethyl-dUMP: glycine 7, isoleucine 9, arginine 10, glycine 11, serine 79, glycine 81, glutamate 85, and serine 109.

This sequence belongs to the 2'-deoxynucleoside 5'-phosphate N-hydrolase 1 family. In terms of assembly, monomer and homodimer.

The protein localises to the cytoplasm. Its subcellular location is the nucleus. It carries out the reaction 5-hydroxymethyl-dUMP + H2O = 5-hydroxymethyluracil + 2-deoxy-D-ribose 5-phosphate. In terms of biological role, part of a nucleotide salvage pathway that eliminates epigenetically modified 5-hydroxymethyl-dCMP (hmdCMP) in a two-step process entailing deamination to cytotoxic 5-hydroxymethyl-dUMP (hmdUMP), followed by its hydrolysis into 5-hydroxymethyluracil (hmU) and 2-deoxy-D-ribose 5-phosphate (deoxyribosephosphate). Catalyzes the second step in that pathway, the hydrolysis of the N-glycosidic bond in hmdUMP, degrading this cytotoxic nucleotide to avoid its genomic integration. The sequence is that of 5-hydroxymethyl-dUMP N-hydrolase from Esox lucius (Northern pike).